Consider the following 358-residue polypeptide: Protein-glutamate methylesterase/protein-glutamine glutaminase 2 (358 aa).

A Response regulatory domain is found at 8-125 (RVLIVDDSAV…ARGLEGYAEE (118 aa)). Asp-59 bears the 4-aspartylphosphate mark. Residues 157 to 352 (PMPGSALRFR…LDRVAERLLA (196 aa)) enclose the CheB-type methylesterase domain. Residues Ser-177, His-203, and Asp-299 contribute to the active site.

The protein belongs to the CheB family. In terms of processing, phosphorylated by CheA. Phosphorylation of the N-terminal regulatory domain activates the methylesterase activity.

It localises to the cytoplasm. It catalyses the reaction [protein]-L-glutamate 5-O-methyl ester + H2O = L-glutamyl-[protein] + methanol + H(+). It carries out the reaction L-glutaminyl-[protein] + H2O = L-glutamyl-[protein] + NH4(+). Involved in chemotaxis. Part of a chemotaxis signal transduction system that modulates chemotaxis in response to various stimuli. Catalyzes the demethylation of specific methylglutamate residues introduced into the chemoreceptors (methyl-accepting chemotaxis proteins or MCP) by CheR. Also mediates the irreversible deamidation of specific glutamine residues to glutamic acid. This Xanthomonas oryzae pv. oryzae (strain MAFF 311018) protein is Protein-glutamate methylesterase/protein-glutamine glutaminase 2.